A 235-amino-acid chain; its full sequence is Ribonuclease PH (235 aa).

Phosphate contacts are provided by residues arginine 86 and 124 to 126 (GTR).

The protein belongs to the RNase PH family. In terms of assembly, homohexameric ring arranged as a trimer of dimers.

It catalyses the reaction tRNA(n+1) + phosphate = tRNA(n) + a ribonucleoside 5'-diphosphate. Phosphorolytic 3'-5' exoribonuclease that plays an important role in tRNA 3'-end maturation. Removes nucleotide residues following the 3'-CCA terminus of tRNAs; can also add nucleotides to the ends of RNA molecules by using nucleoside diphosphates as substrates, but this may not be physiologically important. Probably plays a role in initiation of 16S rRNA degradation (leading to ribosome degradation) during starvation. This is Ribonuclease PH from Legionella pneumophila (strain Paris).